A 259-amino-acid chain; its full sequence is 5'-nucleotidase SurE (259 aa).

A divalent metal cation is bound by residues Asp-8, Asp-9, Ser-39, and Asn-93.

It belongs to the SurE nucleotidase family. A divalent metal cation serves as cofactor.

It is found in the cytoplasm. It carries out the reaction a ribonucleoside 5'-phosphate + H2O = a ribonucleoside + phosphate. Its function is as follows. Nucleotidase that shows phosphatase activity on nucleoside 5'-monophosphates. The protein is 5'-nucleotidase SurE of Thermococcus kodakarensis (strain ATCC BAA-918 / JCM 12380 / KOD1) (Pyrococcus kodakaraensis (strain KOD1)).